The primary structure comprises 206 residues: Glutathione S-transferase 1 (206 aa).

Residues proline 2 to glycine 79 form the GST N-terminal domain. Residues tyrosine 8, tryptophan 39, lysine 43, glycine 49–leucine 51, and glutamine 63–serine 64 each bind glutathione. Residues threonine 81–tyrosine 206 form the GST C-terminal domain.

This sequence belongs to the GST superfamily. Sigma family.

It carries out the reaction RX + glutathione = an S-substituted glutathione + a halide anion + H(+). In terms of biological role, conjugation of reduced glutathione to a wide number of exogenous and endogenous hydrophobic electrophiles. Can also function as a GSH peroxidase. The protein is Glutathione S-transferase 1 (GST1) of Ascaris suum (Pig roundworm).